Reading from the N-terminus, the 271-residue chain is Putative phosphoenolpyruvate synthase regulatory protein (271 aa).

152-159 (GVSRCGKT) is a binding site for ADP.

The protein belongs to the pyruvate, phosphate/water dikinase regulatory protein family. PSRP subfamily.

The catalysed reaction is [pyruvate, water dikinase] + ADP = [pyruvate, water dikinase]-phosphate + AMP + H(+). It catalyses the reaction [pyruvate, water dikinase]-phosphate + phosphate + H(+) = [pyruvate, water dikinase] + diphosphate. Bifunctional serine/threonine kinase and phosphorylase involved in the regulation of the phosphoenolpyruvate synthase (PEPS) by catalyzing its phosphorylation/dephosphorylation. This chain is Putative phosphoenolpyruvate synthase regulatory protein, found in Legionella pneumophila (strain Lens).